We begin with the raw amino-acid sequence, 283 residues long: Phosphatidylglycerol--prolipoprotein diacylglyceryl transferase (283 aa).

3 consecutive transmembrane segments (helical) span residues 17–37 (LAVRWYALSYILGFILFTFLG), 56–76 (FLTWGILGVILGGRLGYVLFY), and 92–112 (WEGGMSFHGGFLGVVIAIWLF). R139 contacts a 1,2-diacyl-sn-glycero-3-phospho-(1'-sn-glycerol). 2 helical membrane passes run 222–242 (GQTAALFLGGYGVFRFIAEFA) and 255–275 (GLSMGQWLSVPMIVLGIVGFV).

This sequence belongs to the Lgt family.

The protein resides in the cell inner membrane. It catalyses the reaction L-cysteinyl-[prolipoprotein] + a 1,2-diacyl-sn-glycero-3-phospho-(1'-sn-glycerol) = an S-1,2-diacyl-sn-glyceryl-L-cysteinyl-[prolipoprotein] + sn-glycerol 1-phosphate + H(+). It participates in protein modification; lipoprotein biosynthesis (diacylglyceryl transfer). Functionally, catalyzes the transfer of the diacylglyceryl group from phosphatidylglycerol to the sulfhydryl group of the N-terminal cysteine of a prolipoprotein, the first step in the formation of mature lipoproteins. The polypeptide is Phosphatidylglycerol--prolipoprotein diacylglyceryl transferase (Neisseria gonorrhoeae (strain ATCC 700825 / FA 1090)).